Consider the following 98-residue polypeptide: MSWAGSKRRQELPEDWELNYRLPVLSAAGWLCEVDGPGCVRAATDVDHKKPGNDHSRSNLQAICRVCHGKKSAAEGVARRRELKARRKRPEQRHPGRR.

Residues 41 to 73 (RAATDVDHKKPGNDHSRSNLQAICRVCHGKKSA) enclose the HNH domain. The interval 75-98 (EGVARRRELKARRKRPEQRHPGRR) is disordered. Residues 81–98 (RELKARRKRPEQRHPGRR) show a composition bias toward basic residues.

This chain is Gene 4 protein (4), found in Mycobacterium (Mycobacteriophage D29).